The chain runs to 440 residues: Asparagine--tRNA ligase (440 aa).

It belongs to the class-II aminoacyl-tRNA synthetase family. As to quaternary structure, homodimer.

Its subcellular location is the cytoplasm. The catalysed reaction is tRNA(Asn) + L-asparagine + ATP = L-asparaginyl-tRNA(Asn) + AMP + diphosphate + H(+). The sequence is that of Asparagine--tRNA ligase from Chloroflexus aurantiacus (strain ATCC 29364 / DSM 637 / Y-400-fl).